The sequence spans 585 residues: Arginine--tRNA ligase (585 aa).

Positions 131–141 (ANPTGPMHVGH) match the 'HIGH' region motif.

This sequence belongs to the class-I aminoacyl-tRNA synthetase family. Monomer.

It is found in the cytoplasm. It carries out the reaction tRNA(Arg) + L-arginine + ATP = L-arginyl-tRNA(Arg) + AMP + diphosphate. The protein is Arginine--tRNA ligase of Chelativorans sp. (strain BNC1).